Here is a 192-residue protein sequence, read N- to C-terminus: Type-4 uracil-DNA glycosylase (192 aa).

[4Fe-4S] cluster-binding residues include C18 and C21. Residues 45 to 47 (GEG), F59, and N85 each bind uracil. C89 and C105 together coordinate [4Fe-4S] cluster. H161 is a binding site for uracil.

Belongs to the uracil-DNA glycosylase (UDG) superfamily. Type 4 (UDGa) family.

The catalysed reaction is Hydrolyzes single-stranded DNA or mismatched double-stranded DNA and polynucleotides, releasing free uracil.. Its function is as follows. Removes uracil bases that are present in DNA as a result of either deamination of cytosine or misincorporation of dUMP instead of dTMP. Can remove uracil from double-stranded DNA containing either a U/G or U/A base pair as well as from single-stranded DNA. This chain is Type-4 uracil-DNA glycosylase, found in Thermotoga maritima (strain ATCC 43589 / DSM 3109 / JCM 10099 / NBRC 100826 / MSB8).